The sequence spans 318 residues: Malate dehydrogenase (318 aa).

NAD(+) contacts are provided by residues 10–15 (GAGNIG) and aspartate 34. Arginine 83 and arginine 89 together coordinate substrate. Residues asparagine 96 and 119–121 (ITN) each bind NAD(+). Residues asparagine 121 and arginine 152 each coordinate substrate. The Proton acceptor role is filled by histidine 176.

Belongs to the LDH/MDH superfamily. MDH type 3 family.

It catalyses the reaction (S)-malate + NAD(+) = oxaloacetate + NADH + H(+). Catalyzes the reversible oxidation of malate to oxaloacetate. The chain is Malate dehydrogenase from Rhodospirillum rubrum (strain ATCC 11170 / ATH 1.1.1 / DSM 467 / LMG 4362 / NCIMB 8255 / S1).